Reading from the N-terminus, the 943-residue chain is Isoleucine--tRNA ligase (943 aa).

The 'HIGH' region motif lies at 58 to 68; sequence PYANGTIHIGH. Glu-567 is a binding site for L-isoleucyl-5'-AMP. The 'KMSKS' region signature appears at 608–612; it reads KMSKS. Position 611 (Lys-611) interacts with ATP. Positions 906, 909, 926, and 929 each coordinate Zn(2+).

Belongs to the class-I aminoacyl-tRNA synthetase family. IleS type 1 subfamily. As to quaternary structure, monomer. Zn(2+) is required as a cofactor.

It is found in the cytoplasm. It carries out the reaction tRNA(Ile) + L-isoleucine + ATP = L-isoleucyl-tRNA(Ile) + AMP + diphosphate. Functionally, catalyzes the attachment of isoleucine to tRNA(Ile). As IleRS can inadvertently accommodate and process structurally similar amino acids such as valine, to avoid such errors it has two additional distinct tRNA(Ile)-dependent editing activities. One activity is designated as 'pretransfer' editing and involves the hydrolysis of activated Val-AMP. The other activity is designated 'posttransfer' editing and involves deacylation of mischarged Val-tRNA(Ile). The polypeptide is Isoleucine--tRNA ligase (Pseudomonas fluorescens (strain SBW25)).